The sequence spans 724 residues: Catalase-peroxidase (724 aa).

Residues 98–226 (WHAAGSYRTA…LAAVQMGLIY (129 aa)) constitute a cross-link (tryptophyl-tyrosyl-methioninium (Trp-Tyr) (with M-252)). The active-site Proton acceptor is the His99. The segment at residues 226-252 (YVNPQGVNGEPDPLRTALHVRETFARM) is a cross-link (tryptophyl-tyrosyl-methioninium (Tyr-Met) (with W-98)). His267 is a heme b binding site.

It belongs to the peroxidase family. Peroxidase/catalase subfamily. Homodimer or homotetramer. Requires heme b as cofactor. Formation of the three residue Trp-Tyr-Met cross-link is important for the catalase, but not the peroxidase activity of the enzyme.

The catalysed reaction is H2O2 + AH2 = A + 2 H2O. The enzyme catalyses 2 H2O2 = O2 + 2 H2O. Its function is as follows. Bifunctional enzyme with both catalase and broad-spectrum peroxidase activity. The sequence is that of Catalase-peroxidase from Cereibacter sphaeroides (strain ATCC 17025 / ATH 2.4.3) (Rhodobacter sphaeroides).